The sequence spans 229 residues: Large ribosomal subunit protein uL1 (229 aa).

Belongs to the universal ribosomal protein uL1 family. Part of the 50S ribosomal subunit.

Its function is as follows. Binds directly to 23S rRNA. The L1 stalk is quite mobile in the ribosome, and is involved in E site tRNA release. Protein L1 is also a translational repressor protein, it controls the translation of the L11 operon by binding to its mRNA. This Pediococcus pentosaceus (strain ATCC 25745 / CCUG 21536 / LMG 10740 / 183-1w) protein is Large ribosomal subunit protein uL1.